Reading from the N-terminus, the 140-residue chain is Large ribosomal subunit protein uL11 (140 aa).

This sequence belongs to the universal ribosomal protein uL11 family. In terms of assembly, part of the ribosomal stalk of the 50S ribosomal subunit. Interacts with L10 and the large rRNA to form the base of the stalk. L10 forms an elongated spine to which L12 dimers bind in a sequential fashion forming a multimeric L10(L12)X complex. In terms of processing, one or more lysine residues are methylated.

In terms of biological role, forms part of the ribosomal stalk which helps the ribosome interact with GTP-bound translation factors. The polypeptide is Large ribosomal subunit protein uL11 (Desulfatibacillum aliphaticivorans).